The primary structure comprises 380 residues: Large ribosomal subunit protein mL38 (380 aa).

A mitochondrion-targeting transit peptide spans 1–26 (MAAPWWRAALCECRRWRGFSTSAVLG). Positions 99-127 (RTQQLLERKQAIQELRANVEEERAARLRT) form a coiled coil.

The protein belongs to the phosphatidylethanolamine-binding protein family. Mitochondrion-specific ribosomal protein mL38 subfamily. Component of the mitochondrial large ribosomal subunit (mt-LSU). Mature mammalian 55S mitochondrial ribosomes consist of a small (28S) and a large (39S) subunit. The 28S small subunit contains a 12S ribosomal RNA (12S mt-rRNA) and 30 different proteins. The 39S large subunit contains a 16S rRNA (16S mt-rRNA), a copy of mitochondrial valine transfer RNA (mt-tRNA(Val)), which plays an integral structural role, and 52 different proteins. mL38 is located at the central protuberance.

The protein resides in the mitochondrion. This chain is Large ribosomal subunit protein mL38 (MRPL38), found in Homo sapiens (Human).